A 414-amino-acid chain; its full sequence is 3-oxoacyl-[acyl-carrier-protein] synthase 2 (414 aa).

The Ketosynthase family 3 (KS3) domain maps to 4–411 (NIRVVITGMG…GHNAVLVFKK (408 aa)). Active-site for beta-ketoacyl synthase activity residues include C165, H304, and H341.

It belongs to the thiolase-like superfamily. Beta-ketoacyl-ACP synthases family.

The catalysed reaction is a fatty acyl-[ACP] + malonyl-[ACP] + H(+) = a 3-oxoacyl-[ACP] + holo-[ACP] + CO2. It catalyses the reaction (9Z)-hexadecenoyl-[ACP] + malonyl-[ACP] + H(+) = 3-oxo-(11Z)-octadecenoyl-[ACP] + holo-[ACP] + CO2. It functions in the pathway lipid metabolism; fatty acid biosynthesis. Involved in the type II fatty acid elongation cycle. Catalyzes the elongation of a wide range of acyl-ACP by the addition of two carbons from malonyl-ACP to an acyl acceptor. Can efficiently catalyze the conversion of palmitoleoyl-ACP (cis-hexadec-9-enoyl-ACP) to cis-vaccenoyl-ACP (cis-octadec-11-enoyl-ACP), an essential step in the thermal regulation of fatty acid composition. The sequence is that of 3-oxoacyl-[acyl-carrier-protein] synthase 2 (fabF) from Staphylococcus aureus (strain MRSA252).